Here is a 467-residue protein sequence, read N- to C-terminus: Protein CitXG (467 aa).

The apo-citrate lyase phosphoribosyl-dephospho-CoA transferase stretch occupies residues 1–178; that stretch reads MDYFEGGERL…NKMLHNFEKS (178 aa). The segment at 179–467 is 2-(5''-triphosphoribosyl)-3'-dephosphocoenzyme-A synthase; sequence KMIVPQMTQS…IFLARLVGSL (289 aa).

This sequence in the N-terminal section; belongs to the CitX family. The protein in the C-terminal section; belongs to the CitG/MdcB family.

The enzyme catalyses apo-[citrate lyase ACP] + 2'-(5''-triphospho-alpha-D-ribosyl)-3'-dephospho-CoA = holo-[citrate lyase ACP] + diphosphate. The catalysed reaction is 3'-dephospho-CoA + ATP = 2'-(5''-triphospho-alpha-D-ribosyl)-3'-dephospho-CoA + adenine. Its function is as follows. Bifunctional enzyme that catalyzes formation of 2-(5''-triphosphoribosyl)-3'-dephosphocoenzyme-A, and then the transfer of this prosthetic group precursor to the apo-acyl carrier protein (gamma chain) of the citrate lyase to yield the holo-acyl carrier protein. The polypeptide is Protein CitXG (citXG) (Leuconostoc mesenteroides subsp. cremoris).